Here is a 1101-residue protein sequence, read N- to C-terminus: Type VI secretion system component TssM1 (1101 aa).

Residues 371 to 391 (LTIGALSATALVVLAVTAVWI) form a helical membrane-spanning segment.

The protein resides in the cell inner membrane. Functionally, core component of the type VI (T6SS) secretion system that plays a role in the release of toxins targeting both eukaryotic and prokaryotic species. Plays an essential role in stabilization of assembled TssK1 structure at a fixed perimembrane site. The chain is Type VI secretion system component TssM1 from Pseudomonas aeruginosa (strain ATCC 15692 / DSM 22644 / CIP 104116 / JCM 14847 / LMG 12228 / 1C / PRS 101 / PAO1).